A 638-amino-acid chain; its full sequence is ATP-dependent zinc metalloprotease FtsH (638 aa).

Residues 1 to 11 (MSQKGKNKKWR) are Cytoplasmic-facing. A helical transmembrane segment spans residues 12-32 (SAGLYALLAIVLISLATTFLG). Residues 33 to 114 (NRPPERLEIS…LAVRPVQEEG (82 aa)) lie on the Lumenal side of the membrane. The chain crosses the membrane as a helical span at residues 115-135 (LLGRILSTFFLPVLLLLGLFF). Residues 136–638 (LLRRAQNGPG…TLPMAVNAGA (503 aa)) are Cytoplasmic-facing. Position 209 to 216 (209 to 216 (GPPGTGKT)) interacts with ATP. Histidine 431 provides a ligand contact to Zn(2+). The active site involves glutamate 432. Zn(2+) contacts are provided by histidine 435 and aspartate 510.

In the central section; belongs to the AAA ATPase family. This sequence in the C-terminal section; belongs to the peptidase M41 family. In terms of assembly, homohexamer. The cofactor is Zn(2+).

It is found in the cellular thylakoid membrane. Acts as a processive, ATP-dependent zinc metallopeptidase for both cytoplasmic and membrane proteins. Plays a role in the quality control of integral membrane proteins. The sequence is that of ATP-dependent zinc metalloprotease FtsH from Synechococcus sp. (strain JA-2-3B'a(2-13)) (Cyanobacteria bacterium Yellowstone B-Prime).